A 372-amino-acid chain; its full sequence is High-affinity lysophosphatidic acid receptor (372 aa).

Topologically, residues 1–38 are extracellular; sequence MGCNNTALDNCMLPNLSIATAPLDLRFAFSTPLRMLLA. N-linked (GlcNAc...) asparagine glycans are attached at residues Asn4 and Asn15. The chain crosses the membrane as a helical span at residues 39–59; sequence IIMILMIAIAFLGNAIVCLIV. The Cytoplasmic segment spans residues 60-80; it reads YQKPAMRSAINLLLATLAFSD. Residues 81–101 form a helical membrane-spanning segment; the sequence is IMLSLFCMPFTAVTIITGSWL. Residues 102–108 are Extracellular-facing; it reads FGTQFCQ. The chain crosses the membrane as a helical span at residues 109–129; sequence ISAMLYWFFVLEGVAILLIIS. At 130-149 the chain is on the cytoplasmic side; that stretch reads VDRFLIIVQRQDKLNPHRAK. Residues 150-170 traverse the membrane as a helical segment; it reads IMIAASWVLSFCISLPSVVGW. The Extracellular segment spans residues 171–198; the sequence is TLVEVPTRAPQCVLGYTEFSADRVYAVM. The helical transmembrane segment at 199–219 threads the bilayer; sequence LIVAVFFIPFSVMLYSYLCIL. Topologically, residues 220 to 268 are cytoplasmic; it reads NTVRRNAVRIHTHADSLCLSQVSKLGLMGLQRPHQMNVDMSFKTRAFTT. The chain crosses the membrane as a helical span at residues 269–289; that stretch reads ILILFIGFSLCWLPHSVFSLL. At 290–301 the chain is on the extracellular side; it reads SVFSRTFYYSSS. The helical transmembrane segment at 302 to 324 threads the bilayer; it reads FYSISTCTLWLTYLKSVFNPVIY. At 325–372 the chain is on the cytoplasmic side; the sequence is CWRIKKFREACLEFMPKTFKILPNVRGRTRRRIRPSTIYVCGEHQSAV.

Belongs to the G-protein coupled receptor 1 family. As to expression, ubiquitously expressed.

It is found in the cell membrane. In terms of biological role, highly selective receptor for lysophosphatidic acid (LPA), a mediator of diverse cellular activities. This chain is High-affinity lysophosphatidic acid receptor, found in Xenopus laevis (African clawed frog).